Consider the following 194-residue polypeptide: Orotate phosphoribosyltransferase (194 aa).

117 to 125 (EDVVTTGLS) contacts 5-phospho-alpha-D-ribose 1-diphosphate. Orotate-binding residues include threonine 121 and arginine 149.

The protein belongs to the purine/pyrimidine phosphoribosyltransferase family. PyrE subfamily. Homodimer. Mg(2+) is required as a cofactor.

It carries out the reaction orotidine 5'-phosphate + diphosphate = orotate + 5-phospho-alpha-D-ribose 1-diphosphate. It participates in pyrimidine metabolism; UMP biosynthesis via de novo pathway; UMP from orotate: step 1/2. Its function is as follows. Catalyzes the transfer of a ribosyl phosphate group from 5-phosphoribose 1-diphosphate to orotate, leading to the formation of orotidine monophosphate (OMP). The polypeptide is Orotate phosphoribosyltransferase (Novosphingobium aromaticivorans (strain ATCC 700278 / DSM 12444 / CCUG 56034 / CIP 105152 / NBRC 16084 / F199)).